A 420-amino-acid polypeptide reads, in one-letter code: Tyrosine--tRNA ligase (420 aa).

Residue Tyr-38 participates in L-tyrosine binding. Positions 43 to 52 (PTGDSLHIGH) match the 'HIGH' region motif. L-tyrosine is bound by residues Tyr-169 and Gln-173. Residues 231–235 (KFGKS) carry the 'KMSKS' region motif. Lys-234 is an ATP binding site. An S4 RNA-binding domain is found at 353-419 (KNLVDFLVDT…GKRKYTLVTI (67 aa)).

This sequence belongs to the class-I aminoacyl-tRNA synthetase family. TyrS type 1 subfamily. Homodimer.

Its subcellular location is the cytoplasm. It carries out the reaction tRNA(Tyr) + L-tyrosine + ATP = L-tyrosyl-tRNA(Tyr) + AMP + diphosphate + H(+). In terms of biological role, catalyzes the attachment of tyrosine to tRNA(Tyr) in a two-step reaction: tyrosine is first activated by ATP to form Tyr-AMP and then transferred to the acceptor end of tRNA(Tyr). This is Tyrosine--tRNA ligase from Lactobacillus helveticus (strain DPC 4571).